Consider the following 509-residue polypeptide: Cytochrome P450 4X1 (509 aa).

Residues 14 to 34 (FYLAFVFCLALGLLQAIKLYL) form a helical membrane-spanning segment. Cysteine 454 is a heme binding site.

This sequence belongs to the cytochrome P450 family. The cofactor is heme. As to expression, expressed in brain, heart, kidney and skin and, at lower levels, in skeletal muscle and liver. In the brain, high levels are detected in amygdala and lower levels in globus pallidus and cerebellum. In the heart, very high levels in aorta, but very low levels in other heart regions. Also expressed in breast, prostate and colon.

The protein resides in the endoplasmic reticulum membrane. It localises to the microsome membrane. The catalysed reaction is N-(5Z,8Z,11Z,14Z-eicosatetraenoyl)-ethanolamine + reduced [NADPH--hemoprotein reductase] + O2 = N-(14,15-epoxy-5Z,8Z,11Z-eicosatrienoyl)-ethanolamine + oxidized [NADPH--hemoprotein reductase] + H2O + H(+). Functionally, a cytochrome P450 monooxygenase that selectively catalyzes the epoxidation of the last double bond of the arachidonoyl moiety of anandamide, potentially modulating endocannabinoid signaling. Has no hydroxylase activity toward various fatty acids, steroids and prostaglandins. Mechanistically, uses molecular oxygen inserting one oxygen atom into a substrate, and reducing the second into a water molecule, with two electrons provided by NADPH via cytochrome P450 reductase (CPR; NADPH-ferrihemoprotein reductase). This chain is Cytochrome P450 4X1, found in Homo sapiens (Human).